The chain runs to 361 residues: Probable dual-specificity RNA methyltransferase RlmN (361 aa).

The Proton acceptor role is filled by Glu102. Residues 108–344 (SGDRLTVCVS…VRWSKGLGAD (237 aa)) enclose the Radical SAM core domain. Cys115 and Cys347 are joined by a disulfide. Residues Cys122, Cys126, and Cys129 each contribute to the [4Fe-4S] cluster site. Residues 169–170 (GE), Ser199, 228–230 (SLH), and Asn304 contribute to the S-adenosyl-L-methionine site. Cys347 acts as the S-methylcysteine intermediate in catalysis.

Belongs to the radical SAM superfamily. RlmN family. The cofactor is [4Fe-4S] cluster.

Its subcellular location is the cytoplasm. It carries out the reaction adenosine(2503) in 23S rRNA + 2 reduced [2Fe-2S]-[ferredoxin] + 2 S-adenosyl-L-methionine = 2-methyladenosine(2503) in 23S rRNA + 5'-deoxyadenosine + L-methionine + 2 oxidized [2Fe-2S]-[ferredoxin] + S-adenosyl-L-homocysteine. The enzyme catalyses adenosine(37) in tRNA + 2 reduced [2Fe-2S]-[ferredoxin] + 2 S-adenosyl-L-methionine = 2-methyladenosine(37) in tRNA + 5'-deoxyadenosine + L-methionine + 2 oxidized [2Fe-2S]-[ferredoxin] + S-adenosyl-L-homocysteine. Functionally, specifically methylates position 2 of adenine 2503 in 23S rRNA and position 2 of adenine 37 in tRNAs. This Synechococcus elongatus (strain ATCC 33912 / PCC 7942 / FACHB-805) (Anacystis nidulans R2) protein is Probable dual-specificity RNA methyltransferase RlmN.